The chain runs to 360 residues: Proline-rich protein 11 (360 aa).

Disordered stretches follow at residues 20-43 (KKKE…SPER) and 174-201 (PPTL…PPLA). Residue threonine 33 is modified to Phosphothreonine. The residue at position 40 (serine 40) is a Phosphoserine. Residues 175–201 (PTLPQPASHFPPPPPPPPLPPPPPPLA) are compositionally biased toward pro residues. A Phosphodegron motif is present at residues 285-291 (LITPGKS). Threonine 287 carries the post-translational modification Phosphothreonine. Position 291 is a phosphoserine (serine 291). The D-box signature appears at 296 to 304 (RKLLRKVDV). The KEN box motif lies at 316-318 (KEN). The short motif at 325–330 (LTPVMT) is the Phosphodegron element. Positions 340 to 360 (AHPRSPTPTLPLSTSSFDEQN) are disordered. Phosphoserine is present on serine 344. A phosphothreonine mark is found at threonine 346 and threonine 348. The span at 349–360 (LPLSTSSFDEQN) shows a compositional bias: low complexity.

Post-translationally, ubiquitinated. Rapidly degraded by the proteasome; degradation may involve FBXW7-specific phosphorylated phosphodegron motifs. In terms of tissue distribution, ubiquitously expressed.

The protein localises to the cytoplasm. It is found in the nucleus. In terms of biological role, plays a critical role in cell cycle progression. The sequence is that of Proline-rich protein 11 (PRR11) from Homo sapiens (Human).